The following is a 185-amino-acid chain: Orotate phosphoribosyltransferase (185 aa).

5-phospho-alpha-D-ribose 1-diphosphate is bound by residues Arg98, Lys99, Lys102, His104, and Glu128 to Ser136. Residues Thr132 and Arg160 each coordinate orotate.

This sequence belongs to the purine/pyrimidine phosphoribosyltransferase family. PyrE subfamily. Homodimer. Requires Mg(2+) as cofactor.

It catalyses the reaction orotidine 5'-phosphate + diphosphate = orotate + 5-phospho-alpha-D-ribose 1-diphosphate. It participates in pyrimidine metabolism; UMP biosynthesis via de novo pathway; UMP from orotate: step 1/2. Functionally, catalyzes the transfer of a ribosyl phosphate group from 5-phosphoribose 1-diphosphate to orotate, leading to the formation of orotidine monophosphate (OMP). The chain is Orotate phosphoribosyltransferase from Bradyrhizobium sp. (strain BTAi1 / ATCC BAA-1182).